A 132-amino-acid chain; its full sequence is Small ribosomal subunit protein uS8 (132 aa).

This sequence belongs to the universal ribosomal protein uS8 family. In terms of assembly, part of the 30S ribosomal subunit. Contacts proteins S5 and S12.

One of the primary rRNA binding proteins, it binds directly to 16S rRNA central domain where it helps coordinate assembly of the platform of the 30S subunit. This chain is Small ribosomal subunit protein uS8, found in Nitrobacter hamburgensis (strain DSM 10229 / NCIMB 13809 / X14).